The following is a 341-amino-acid chain: GTPase Obg (341 aa).

The region spanning 1–159 (MKFLDQAKIY…RTIWLRLKLI (159 aa)) is the Obg domain. The OBG-type G domain maps to 160 to 327 (ADAGLVGLPN…TLRQLARIID (168 aa)). Residues 166 to 173 (GLPNAGKS), 191 to 195 (FTTLH), 212 to 215 (DIPG), 279 to 282 (SQVD), and 308 to 310 (SAV) each bind GTP. Mg(2+)-binding residues include Ser173 and Thr193.

The protein belongs to the TRAFAC class OBG-HflX-like GTPase superfamily. OBG GTPase family. As to quaternary structure, monomer. The cofactor is Mg(2+).

The protein resides in the cytoplasm. In terms of biological role, an essential GTPase which binds GTP, GDP and possibly (p)ppGpp with moderate affinity, with high nucleotide exchange rates and a fairly low GTP hydrolysis rate. Plays a role in control of the cell cycle, stress response, ribosome biogenesis and in those bacteria that undergo differentiation, in morphogenesis control. The chain is GTPase Obg from Brucella abortus biovar 1 (strain 9-941).